The following is a 284-amino-acid chain: uncharacterized protein (284 aa).

Residue Q54 coordinates FMN. Residue C83 is the Proton donor of the active site. FMN is bound by residues K125, H153, 183-185 (NGG), and 207-208 (AN).

It belongs to the Dus family. The cofactor is FMN.

Functionally, catalyzes the synthesis of dihydrouridine, a modified base found in the D-loop of most tRNAs. This is an uncharacterized protein from Caenorhabditis elegans.